We begin with the raw amino-acid sequence, 201 residues long: IDLSRF-like peptide (201 aa).

Positions 1–28 are cleaved as a signal peptide; that stretch reads MVRRFCNGAVALGIALTACAAFPRAIMA. Positions 43–201 are excised as a propeptide; the sequence is SDACHPYEPF…EKLVKTGFLD (159 aa). An LDL-receptor class A domain is found at 45-85; that stretch reads ACHPYEPFKCPGDGLCISIQYLCDGAPDCQDGYDEDSRLCT. 3 disulfides stabilise this stretch: Cys46/Cys60, Cys54/Cys73, and Cys67/Cys84.

As to expression, expressed in central brain, antennal and optical lobes, in gnathal, thoracic and abdominal ganglia and in the retrocerebral complex (at protein level).

Its subcellular location is the secreted. This chain is IDLSRF-like peptide, found in Camponotus floridanus (Florida carpenter ant).